A 378-amino-acid polypeptide reads, in one-letter code: Cytochrome b (378 aa).

4 helical membrane-spanning segments follow: residues 32 to 52, 76 to 97, 112 to 132, and 177 to 197; these read FGSLLGLCLVIQILTGLFLAM, WLIRYMHANGASMFFICLFLHV, WNIGVILLFAVMATAFMGYVL, and FFAFHFILPFIVAALVMVHLL. Residues His82 and His96 each contribute to the heme b site. Residues His181 and His195 each contribute to the heme b site. Position 200 (His200) interacts with a ubiquinone. A run of 4 helical transmembrane segments spans residues 225–245, 287–307, 319–339, and 346–366; these read IKDALGIFLLLLLFMTLVLFF, LGGVLALIFSILILMMFPILH, LSQCLFWILVADLFTLTWIGG, and FITIGQVASIIYFVIILFALP.

The protein belongs to the cytochrome b family. In terms of assembly, the cytochrome bc1 complex contains 11 subunits: 3 respiratory subunits (MT-CYB, CYC1 and UQCRFS1), 2 core proteins (UQCRC1 and UQCRC2) and 6 low-molecular weight proteins (UQCRH/QCR6, UQCRB/QCR7, UQCRQ/QCR8, UQCR10/QCR9, UQCR11/QCR10 and a cleavage product of UQCRFS1). This cytochrome bc1 complex then forms a dimer. It depends on heme b as a cofactor.

Its subcellular location is the mitochondrion inner membrane. Component of the ubiquinol-cytochrome c reductase complex (complex III or cytochrome b-c1 complex) that is part of the mitochondrial respiratory chain. The b-c1 complex mediates electron transfer from ubiquinol to cytochrome c. Contributes to the generation of a proton gradient across the mitochondrial membrane that is then used for ATP synthesis. The polypeptide is Cytochrome b (MT-CYB) (Sciurus aberti (Abert's squirrel)).